The primary structure comprises 94 residues: Phormicin (94 aa).

Residues 1–23 (MKFFMVFVVTFCLAVCFVSQSLA) form the signal peptide. Positions 24–54 (IPADAANDAHFVDGVQALKEIEPELHGRYKR) are excised as a propeptide. 3 cysteine pairs are disulfide-bonded: Cys57-Cys84, Cys70-Cys90, and Cys74-Cys92.

Belongs to the invertebrate defensin family. Type 1 subfamily.

The protein localises to the secreted. In terms of biological role, responsible for the anti Gram-positive activity of immune hemolymph of P.terraenovae. The protein is Phormicin of Protophormia terraenovae (Northern blowfly).